The sequence spans 534 residues: uncharacterized protein (534 aa).

Positions 1 to 22 are cleaved as a signal peptide; it reads MGLRLLFSLICVFCISNIFTQA. N-linked (GlcNAc...) asparagine glycosylation is present at N31. 2 disordered regions span residues 70–145 and 176–418; these read PTYY…SSVS and SSLS…SSAP. N426 carries N-linked (GlcNAc...) asparagine glycosylation.

It is found in the endoplasmic reticulum. Its subcellular location is the cell membrane. This is an uncharacterized protein from Schizosaccharomyces pombe (strain 972 / ATCC 24843) (Fission yeast).